The chain runs to 382 residues: Carbamoyl phosphate synthase small chain (382 aa).

The interval Met-1–Asp-189 is CPSase. L-glutamine is bound by residues Ser-47, Gly-241, and Gly-243. One can recognise a Glutamine amidotransferase type-1 domain in the interval His-193–Ser-380. The active-site Nucleophile is Cys-269. Residues Leu-270, Gln-273, Asn-311, Gly-313, and Phe-314 each contribute to the L-glutamine site. Active-site residues include His-353 and Glu-355.

Belongs to the CarA family. As to quaternary structure, composed of two chains; the small (or glutamine) chain promotes the hydrolysis of glutamine to ammonia, which is used by the large (or ammonia) chain to synthesize carbamoyl phosphate. Tetramer of heterodimers (alpha,beta)4.

It carries out the reaction hydrogencarbonate + L-glutamine + 2 ATP + H2O = carbamoyl phosphate + L-glutamate + 2 ADP + phosphate + 2 H(+). It catalyses the reaction L-glutamine + H2O = L-glutamate + NH4(+). Its pathway is amino-acid biosynthesis; L-arginine biosynthesis; carbamoyl phosphate from bicarbonate: step 1/1. It participates in pyrimidine metabolism; UMP biosynthesis via de novo pathway; (S)-dihydroorotate from bicarbonate: step 1/3. In terms of biological role, small subunit of the glutamine-dependent carbamoyl phosphate synthetase (CPSase). CPSase catalyzes the formation of carbamoyl phosphate from the ammonia moiety of glutamine, carbonate, and phosphate donated by ATP, constituting the first step of 2 biosynthetic pathways, one leading to arginine and/or urea and the other to pyrimidine nucleotides. The small subunit (glutamine amidotransferase) binds and cleaves glutamine to supply the large subunit with the substrate ammonia. This Salmonella typhimurium (strain LT2 / SGSC1412 / ATCC 700720) protein is Carbamoyl phosphate synthase small chain.